We begin with the raw amino-acid sequence, 344 residues long: Anthranilate phosphoribosyltransferase (344 aa).

5-phospho-alpha-D-ribose 1-diphosphate is bound by residues G80, 83–84 (GD), T88, 90–93 (NVST), 108–116 (KHGNRSVSS), and S120. G80 lines the anthranilate pocket. Residue S92 participates in Mg(2+) binding. N111 is an anthranilate binding site. Anthranilate is bound at residue R166. Residues D225 and E226 each contribute to the Mg(2+) site.

It belongs to the anthranilate phosphoribosyltransferase family. In terms of assembly, homodimer. The cofactor is Mg(2+).

The catalysed reaction is N-(5-phospho-beta-D-ribosyl)anthranilate + diphosphate = 5-phospho-alpha-D-ribose 1-diphosphate + anthranilate. It participates in amino-acid biosynthesis; L-tryptophan biosynthesis; L-tryptophan from chorismate: step 2/5. Catalyzes the transfer of the phosphoribosyl group of 5-phosphorylribose-1-pyrophosphate (PRPP) to anthranilate to yield N-(5'-phosphoribosyl)-anthranilate (PRA). In Legionella pneumophila (strain Lens), this protein is Anthranilate phosphoribosyltransferase.